The following is a 437-amino-acid chain: Trypacidin cluster transcriptional coactivator tpcD (437 aa).

The 70-residue stretch at 75–144 (LAVQSQLLSC…PQRGHVAHSP (70 aa)) folds into the HTH iclR-type domain. The segment at residues 105-124 (IADLARLSGVPEAQLARIIR) is a DNA-binding region (H-T-H motif).

Specifically expressed in conidia.

The protein resides in the nucleus. Transcriptional coactivator; part of the gene cluster that mediates the biosynthesis of trypacidin, a mycotoxin with antiprotozoal activity and that plays a role in the infection process. With tpcE, coregulates the production of trypacidin. The polypeptide is Trypacidin cluster transcriptional coactivator tpcD (Aspergillus fumigatus (strain ATCC MYA-4609 / CBS 101355 / FGSC A1100 / Af293) (Neosartorya fumigata)).